The primary structure comprises 476 residues: Vitamin D-binding protein (476 aa).

Positions 1 to 16 (MKRVLVLLLALAFGHA) are cleaved as a signal peptide. Albumin domains are found at residues 17 to 208 (LERG…QMKH), 209 to 394 (LSLL…LLKR), and 395 to 476 (QLTS…TLQS). 14 cysteine pairs are disulfide-bonded: Cys-29–Cys-75, Cys-74–Cys-83, Cys-96–Cys-112, Cys-111–Cys-122, Cys-145–Cys-190, Cys-189–Cys-198, Cys-220–Cys-266, Cys-265–Cys-273, Cys-286–Cys-300, Cys-299–Cys-311, Cys-335–Cys-376, Cys-375–Cys-384, Cys-407–Cys-453, and Cys-452–Cys-462. Residue Asn-288 is glycosylated (N-linked (GlcNAc...) asparagine). The residue at position 434 (Ser-434) is a Phosphoserine.

The protein belongs to the ALB/AFP/VDB family. In terms of assembly, associates with membrane-bound immunoglobulin on the surface of B-lymphocytes and with IgG Fc receptor on the membranes of T-lymphocytes. Interacts with LRP2; the interaction is required for renal uptake of GC in complex with 25-hydroxyvitamin D3.

The protein resides in the secreted. In terms of biological role, involved in vitamin D transport and storage, scavenging of extracellular G-actin, enhancement of the chemotactic activity of C5 alpha for neutrophils in inflammation and macrophage activation. The chain is Vitamin D-binding protein (Gc) from Mus musculus (Mouse).